The sequence spans 330 residues: Putative protein DDB_G0285185 (330 aa).

Residues 212–240 (NKLQNQVQSSPKLSSPITKNKEQIVSTTS) form a disordered region. Polar residues predominate over residues 214-240 (LQNQVQSSPKLSSPITKNKEQIVSTTS).

This Dictyostelium discoideum (Social amoeba) protein is Putative protein DDB_G0285185.